We begin with the raw amino-acid sequence, 626 residues long: MDGLGEKKPWGKLSRLLGAETESSSELFLYKKEWTIGRKKACDLSFPGNKLVSGEHCKITVNEESGSVSLEDTSTNGTVINKLKVVKKQTYPLKNGDVIYVVYRKNEPEQNVAYLYKSLNQAEDSMQNPADTSGSEEADTQTLSSQDDQLSYEEPQPSTSTSSLFSTPTTSASEPACTLLYKSQASVPGVQLESGEKSGESLEGHSSTSDATAHEKGSLGPPKKRMRTEDLWTGNKNLVSASCSKGASDESKTPSMKPDKMEETLTCIICQELLHDCVSLQPCMHTFCAACYSGWMERSSLCPTCRCPVERICKNHILNNLVEAYLIQHPEKCRSEEDRCSMDARNKITQDMLQPKVRRSFSDEEGSSEDLLELSDVDSESSDISQPYTVCRQCPGYVRHNIQPPPYPPPSDTEASRTQGDAPSTSTNFPTATQEYVCPSHGSHVICTCCFQPMPDRRAEREHNSHVAPQQCTICLEPFCHMYWGCNRMGCFGCLAPFCELNLGDKCLDGVLNNNNYESDILKNYLASRGLTWKDMLNESLSAAQRGVFMLPDYRINGTTVLCYFCGLRNFRILTYQYRQNIPASELPVTVTSRPNCYWGRNCRTQVKAHHAMKFNHICEQTRFKN.

Positions 34 to 85 (WTIGRKKACDLSFPGNKLVSGEHCKITVNEESGSVSLEDTSTNGTVINKLKV) constitute an FHA domain. Composition is skewed to polar residues over residues 123 to 133 (EDSMQNPADTS) and 140 to 149 (TQTLSSQDDQ). Disordered regions lie at residues 123–170 (EDSM…TPTT) and 188–229 (PGVQ…MRTE). Over residues 158–170 (STSTSSLFSTPTT) the composition is skewed to low complexity. Over residues 194-203 (SGEKSGESLE) the composition is skewed to basic and acidic residues. The RING-type zinc-finger motif lies at 267–306 (CIICQELLHDCVSLQPCMHTFCAACYSGWMERSSLCPTCR). Disordered regions lie at residues 351 to 387 (DMLQPKVRRSFSDEEGSSEDLLELSDVDSESSDISQP) and 402 to 428 (IQPPPYPPPSDTEASRTQGDAPSTSTN). The span at 363-381 (DEEGSSEDLLELSDVDSES) shows a compositional bias: acidic residues. Residues 416–428 (SRTQGDAPSTSTN) show a composition bias toward polar residues. The PBZ-type zinc finger occupies 595-617 (PNCYWGRNCRTQVKAHHAMKFNH).

The protein belongs to the CHFR family.

It localises to the nucleus. The protein resides in the PML body. The catalysed reaction is S-ubiquitinyl-[E2 ubiquitin-conjugating enzyme]-L-cysteine + [acceptor protein]-L-lysine = [E2 ubiquitin-conjugating enzyme]-L-cysteine + N(6)-ubiquitinyl-[acceptor protein]-L-lysine.. The protein operates within protein modification; protein ubiquitination. E3 ubiquitin-protein ligase that functions in the antephase checkpoint by actively delaying passage into mitosis in response to microtubule poisons. Acts in early prophase before chromosome condensation, when the centrosome move apart from each other along the periphery of the nucleus. Probably involved in signaling the presence of mitotic stress caused by microtubule poisons by mediating the 'Lys-48'-linked ubiquitination of target proteins, leading to their degradation by the proteasome. May also promote the formation of 'Lys-63'-linked polyubiquitin chains and functions with the specific ubiquitin-conjugating ubc13-mms2 (ube2n-ube2v2) heterodimer. Substrates that are polyubiquitinated at 'Lys-63' are usually not targeted for degradation, but are rather involved in signaling cellular stress. This chain is E3 ubiquitin-protein ligase CHFR (chfr), found in Xenopus tropicalis (Western clawed frog).